The sequence spans 108 residues: Ig light chain C region (108 aa).

The region spanning 7-102 is the Ig-like domain; the sequence is PTVSIYCPSL…LTPALAKSFQ (96 aa). Cystine bridges form between cysteine 13/cysteine 106 and cysteine 28/cysteine 86.

The polypeptide is Ig light chain C region (Aquarana catesbeiana (American bullfrog)).